Consider the following 122-residue polypeptide: Large ribosomal subunit protein bL12 (122 aa).

Belongs to the bacterial ribosomal protein bL12 family. As to quaternary structure, homodimer. Part of the ribosomal stalk of the 50S ribosomal subunit. Forms a multimeric L10(L12)X complex, where L10 forms an elongated spine to which 2 to 4 L12 dimers bind in a sequential fashion. Binds GTP-bound translation factors.

Functionally, forms part of the ribosomal stalk which helps the ribosome interact with GTP-bound translation factors. Is thus essential for accurate translation. The chain is Large ribosomal subunit protein bL12 from Vibrio parahaemolyticus serotype O3:K6 (strain RIMD 2210633).